A 384-amino-acid chain; its full sequence is Terpene cyclase ascI (384 aa).

Residues 1 to 25 (MPQLAGKLILAGLIPLGAWVLHGFA) form the signal peptide. Residues 82–102 (LSLHAFMFAGQGVPLLVLNML) traverse the membrane as a helical segment. Asn109 carries an N-linked (GlcNAc...) asparagine glycan. The next 4 membrane-spanning stretches (helical) occupy residues 119-139 (VFGI…YLFL), 164-184 (AVGF…SLPH), 194-214 (VLSV…AYFA), and 235-255 (GAVY…TFAI). Residue Asn258 is glycosylated (N-linked (GlcNAc...) asparagine). The next 2 membrane-spanning stretches (helical) occupy residues 291-311 (WFLQ…AIGI) and 330-350 (IALR…ALSL). N-linked (GlcNAc...) asparagine glycosylation is present at Asn372.

It belongs to the membrane-bound ascI terpene cyclase family.

It localises to the membrane. The catalysed reaction is 16-hydroxy-ilicicolin A epoxide = ascofuranol. The protein operates within secondary metabolite biosynthesis; terpenoid biosynthesis. In terms of biological role, epoxide hydrolase; part of the asc-2 gene cluster that mediates the biosynthesis of ascofuranone, a strong inhibitor of cyanide-insensitive alternative oxidases and a promising drug candidate against African trypanosomiasis. The first step in the pathway is performed by the non-reducing polyketide synthase ascC that produces orsellinic acid by condensing acetyl-CoA with 3 malonyl-CoA units. Orsellinic acid is then prenylated by the prenyltransferase ascA to yield ilicicolinic acid B. Ilicicolinic acid B is further reduced to ilicicolin B by the reductase ascB. The halogenase ascD then chlorinates ilicicolin B to produce ilicicolin A which is converted to ilicicolin A epoxide by the cytochrome P450 monooxygenase ascE that catalyzes stereoselective epoxidation of the terminal double bond of the prenyl group. Ilicicolin A epoxide is the last common precursor for the biosynthesis of ascofuranone and ascochlorin. The terpene cyclase ascF produces a monocyclic terpene, and the cyclization reaction is proposed to be initiated by protonation of the terminal epoxide of ilicicolin A epoxide to generate a monocyclic tertiarycation, which is followed by a series of hydride and methyl shifts with abstraction of proton, leading to the formation of the (14S,15R,19R)-trimethylcyclohexanone ring structure of ilicicolin C, which is finally reduced to ascochlorin by the dehydrogenase ascG. On the other hand, ilicicolin A epoxide is hydroxylated by the cytochrome P450 monooxygenase ascH, and the resultant product is cyclized by the terpene cyclase ascI to ascofuranol via protonation-initiated epoxide ring opening, which facilitates the 6-endo-tet cyclization to form the tetrahy-drofuran ring. Finally, ascofuranol is oxidized into ascofuranone by ascJ. The chain is Terpene cyclase ascI from Acremonium egyptiacum (Oospora egyptiaca).